A 124-amino-acid polypeptide reads, in one-letter code: Probable glycine cleavage system H protein (124 aa).

A Lipoyl-binding domain is found at 25 to 106 (TATIGITDYA…PYGSWLVKMA (82 aa)). The residue at position 66 (K66) is an N6-lipoyllysine.

Belongs to the GcvH family. In terms of assembly, the glycine cleavage system is composed of four proteins: P, T, L and H. The cofactor is (R)-lipoate.

The glycine cleavage system catalyzes the degradation of glycine. The H protein shuttles the methylamine group of glycine from the P protein to the T protein. The chain is Probable glycine cleavage system H protein from Thermoplasma acidophilum (strain ATCC 25905 / DSM 1728 / JCM 9062 / NBRC 15155 / AMRC-C165).